A 152-amino-acid polypeptide reads, in one-letter code: MATLSLLSTGVGAAITNRTPSASLTFITGSRTTNKRVSFNGGSARSGSLHCSFLAPSSSLSSNFSGLSLGLDLTSNTGVSTDRCRRFVVRAGKAALCLTKRSRSRKSLARTHGFRLRMSTTSGRALLKRRRAKGRKILCTKTNPSSGKRASP.

The transit peptide at 1–91 directs the protein to the chloroplast; sequence MATLSLLSTG…DRCRRFVVRA (91 aa).

As to quaternary structure, component of the chloroplast large ribosomal subunit (LSU). Mature 70S chloroplast ribosomes of higher plants consist of a small (30S) and a large (50S) subunit. The 30S small subunit contains 1 molecule of ribosomal RNA (16S rRNA) and 24 different proteins. The 50S large subunit contains 3 rRNA molecules (23S, 5S and 4.5S rRNA) and 33 different proteins.

Its subcellular location is the plastid. It is found in the chloroplast. Its function is as follows. Component of the chloroplast ribosome (chloro-ribosome), a dedicated translation machinery responsible for the synthesis of chloroplast genome-encoded proteins, including proteins of the transcription and translation machinery and components of the photosynthetic apparatus. This Spinacia oleracea (Spinach) protein is Large ribosomal subunit protein bL34c (RPL34).